Here is a 592-residue protein sequence, read N- to C-terminus: Aspartate--tRNA ligase (592 aa).

E171 is an L-aspartate binding site. Residues Q195–K198 are aspartate. L-aspartate is bound at residue R217. Residues R217–E219 and Q226 contribute to the ATP site. H448 serves as a coordination point for L-aspartate. An ATP-binding site is contributed by E482. R489 lines the L-aspartate pocket. Residue G534–R537 coordinates ATP.

It belongs to the class-II aminoacyl-tRNA synthetase family. Type 1 subfamily. As to quaternary structure, homodimer.

It localises to the cytoplasm. It catalyses the reaction tRNA(Asp) + L-aspartate + ATP = L-aspartyl-tRNA(Asp) + AMP + diphosphate. In terms of biological role, catalyzes the attachment of L-aspartate to tRNA(Asp) in a two-step reaction: L-aspartate is first activated by ATP to form Asp-AMP and then transferred to the acceptor end of tRNA(Asp). The sequence is that of Aspartate--tRNA ligase from Vibrio atlanticus (strain LGP32) (Vibrio splendidus (strain Mel32)).